The chain runs to 310 residues: Apolipoprotein E (310 aa).

The signal sequence occupies residues 1-18 (MKVLWAALVVTLLAGCQA). A run of 8 repeats spans residues 77-98 (VLIEETMKEVKTYKAELEQQLG), 99-120 (PMAQETQARVSKELQAAQARLG), 121-142 (ADMEDVRNRLVQYRSELQAMMG), 143-164 (QSTEELRGRLNSHLRKLRKRLL), 165-186 (RDAEDLQKRLAVYQAGIREGAE), 187-204 (RSVNTLRERLGPLVEQAA), 205-226 (TVRSLVSKPLQERAEAWGQRLR), and 227-248 (GRLEKVGIQAGDRLDEVREQVQ). Residues 77–248 (VLIEETMKEV…RLDEVREQVQ (172 aa)) form an 8 X 22 AA approximate tandem repeats region. The residue at position 140 (methionine 140) is a Methionine sulfoxide. Serine 144 carries the phosphoserine modification. The LDL and other lipoprotein receptors binding stretch occupies residues 155 to 165 (HLRKLRKRLLR). Heparin is bound at residue 159–162 (LRKR). The lipid-binding and lipoprotein association stretch occupies residues 203-283 (AATVRSLVSK…SWFEPLVQDM (81 aa)). 222–229 (GQRLRGRL) is a heparin binding site. Positions 259-310 (NQMRLQAEAFHARLKSWFEPLVQDMQQRWAELVEKVQLAVGTSPTSESSEKQ) are homooligomerization. The specificity for association with VLDL stretch occupies residues 271–283 (RLKSWFEPLVQDM).

The protein belongs to the apolipoprotein A1/A4/E family. As to quaternary structure, homotetramer. May interact with ABCA1; functionally associated with ABCA1 in the biogenesis of HDLs. May interact with APP/A4 amyloid-beta peptide; the interaction is extremely stable in vitro but its physiological significance is unclear. May interact with MAPT. May interact with MAP2. In the cerebrospinal fluid, interacts with secreted SORL1. Interacts with PMEL; this allows the loading of PMEL luminal fragment on ILVs to induce fibril nucleation. Post-translationally, APOE exists as multiple glycosylated and sialylated glycoforms within cells and in plasma. The extent of glycosylation and sialylation are tissue and context specific. In terms of processing, glycated in plasma VLDL. Phosphorylated by FAM20C in the extracellular medium.

It is found in the secreted. It localises to the extracellular space. Its subcellular location is the extracellular matrix. The protein resides in the extracellular vesicle. The protein localises to the endosome. It is found in the multivesicular body. Its function is as follows. APOE is an apolipoprotein, a protein associating with lipid particles, that mainly functions in lipoprotein-mediated lipid transport between organs via the plasma and interstitial fluids. APOE is a core component of plasma lipoproteins and is involved in their production, conversion and clearance. Apolipoproteins are amphipathic molecules that interact both with lipids of the lipoprotein particle core and the aqueous environment of the plasma. As such, APOE associates with chylomicrons, chylomicron remnants, very low density lipoproteins (VLDL) and intermediate density lipoproteins (IDL) but shows a preferential binding to high-density lipoproteins (HDL). It also binds a wide range of cellular receptors including the LDL receptor/LDLR, the LDL receptor-related proteins LRP1, LRP2 and LRP8 and the very low-density lipoprotein receptor/VLDLR that mediate the cellular uptake of the APOE-containing lipoprotein particles. Finally, APOE also has a heparin-binding activity and binds heparan-sulfate proteoglycans on the surface of cells, a property that supports the capture and the receptor-mediated uptake of APOE-containing lipoproteins by cells. A main function of APOE is to mediate lipoprotein clearance through the uptake of chylomicrons, VLDLs, and HDLs by hepatocytes. APOE is also involved in the biosynthesis by the liver of VLDLs as well as their uptake by peripheral tissues ensuring the delivery of triglycerides and energy storage in muscle, heart and adipose tissues. By participating in the lipoprotein-mediated distribution of lipids among tissues, APOE plays a critical role in plasma and tissues lipid homeostasis. APOE is also involved in two steps of reverse cholesterol transport, the HDLs-mediated transport of cholesterol from peripheral tissues to the liver, and thereby plays an important role in cholesterol homeostasis. First, it is functionally associated with ABCA1 in the biogenesis of HDLs in tissues. Second, it is enriched in circulating HDLs and mediates their uptake by hepatocytes. APOE also plays an important role in lipid transport in the central nervous system, regulating neuron survival and sprouting. The sequence is that of Apolipoprotein E (APOE) from Tapirus indicus (Asiatic tapir).